The primary structure comprises 408 residues: Peptidase T (408 aa).

Position 78 (H78) interacts with Zn(2+). Residue D80 is part of the active site. D141 is a Zn(2+) binding site. The Proton acceptor role is filled by E175. Positions 176, 198, and 380 each coordinate Zn(2+).

It belongs to the peptidase M20B family. Requires Zn(2+) as cofactor.

It localises to the cytoplasm. The enzyme catalyses Release of the N-terminal residue from a tripeptide.. Cleaves the N-terminal amino acid of tripeptides. This is Peptidase T from Clostridium botulinum (strain Loch Maree / Type A3).